A 185-amino-acid chain; its full sequence is Ribosome maturation factor RimM (185 aa).

A PRC barrel domain is found at 105 to 184 (KDEYYWKDII…IVVVDWEIYK (80 aa)).

This sequence belongs to the RimM family. Binds ribosomal protein uS19.

It is found in the cytoplasm. An accessory protein needed during the final step in the assembly of 30S ribosomal subunit, possibly for assembly of the head region. Essential for efficient processing of 16S rRNA. May be needed both before and after RbfA during the maturation of 16S rRNA. It has affinity for free ribosomal 30S subunits but not for 70S ribosomes. The chain is Ribosome maturation factor RimM from Blochmanniella floridana.